The sequence spans 63 residues: Large ribosomal subunit protein uL30 (63 aa).

The protein belongs to the universal ribosomal protein uL30 family. In terms of assembly, part of the 50S ribosomal subunit.

In Chlorobium chlorochromatii (strain CaD3), this protein is Large ribosomal subunit protein uL30.